The primary structure comprises 282 residues: MAIKKYKSTTNGRRNMTTIDYSAVLTTKNNPEKSLVVSKNSKAGRNNRGLITTRHKGGGHKQKYRIIDFKRNKRDIFGTISTIEYDPNRNAFICLINYVDGEKRYILFAKGMQVGMKVVASENADIKVGNVAPLKNIPEGTLLHNVELKPGKGGQIARSAGSSVQLLGKDDDGKYVTLRLSSGEVRKVLAECYATIGEVGNEEYNLVNWGKAGRNRWRGIRPTVRGSVMNPNDHPHGGGEGRAPIGRKSPVTPWGKKALGVKTRNTKKTSEKLIVRKRSNKK.

Residues 223–282 (TVRGSVMNPNDHPHGGGEGRAPIGRKSPVTPWGKKALGVKTRNTKKTSEKLIVRKRSNKK) form a disordered region.

It belongs to the universal ribosomal protein uL2 family. As to quaternary structure, part of the 50S ribosomal subunit. Forms a bridge to the 30S subunit in the 70S ribosome.

In terms of biological role, one of the primary rRNA binding proteins. Required for association of the 30S and 50S subunits to form the 70S ribosome, for tRNA binding and peptide bond formation. It has been suggested to have peptidyltransferase activity; this is somewhat controversial. Makes several contacts with the 16S rRNA in the 70S ribosome. The protein is Large ribosomal subunit protein uL2 of Mycoplasma mycoides subsp. mycoides SC (strain CCUG 32753 / NCTC 10114 / PG1).